The chain runs to 119 residues: MKKKYRIKKNDDFQKVFRRGKSFANRQFVVYTLKQEGSNHFRIGLSVSKKIGNAVCRNRIKRYIRQSFHELEDQINPENEYIIIARKPAANMDFHEVKKSLIHVLKVGRVLKQKPNNSK.

Belongs to the RnpA family. As to quaternary structure, consists of a catalytic RNA component (M1 or rnpB) and a protein subunit.

The catalysed reaction is Endonucleolytic cleavage of RNA, removing 5'-extranucleotides from tRNA precursor.. RNaseP catalyzes the removal of the 5'-leader sequence from pre-tRNA to produce the mature 5'-terminus. It can also cleave other RNA substrates such as 4.5S RNA. The protein component plays an auxiliary but essential role in vivo by binding to the 5'-leader sequence and broadening the substrate specificity of the ribozyme. The sequence is that of Ribonuclease P protein component from Listeria welshimeri serovar 6b (strain ATCC 35897 / DSM 20650 / CCUG 15529 / CIP 8149 / NCTC 11857 / SLCC 5334 / V8).